The following is a 381-amino-acid chain: MIISASTDYRAAAQRKLPPFLFHYIDGGAYAEYTLRRNVEDLSAIALRQRVLKNMSELSLETRLFDETLAMPVALAPVGLTGMYARRGEVQAARAAAAKGVPFTLSTVSVCPIEEVAPAIDRPMWFQLYVLKDRGFMRNALERAKAAGVTTLVFTVDMPVPGARYRDAHSGMSGPYAAPRRILQAMTHPAWAWDVGLLGKPHDLGNISAYRGNPTGLEDYIGWLGANFDPSISWKDLEWIREFWDGPMVIKGILDPEDARDAVKFGADGIVVSNHGGRQLDGVLSSARALPAIADAVKGELAILADSGIRTGLDVVRMIALGADSVLLGRAFVYALAAAGEAGVRNLLELIEKEMRVAMVLTGAKSIGEISADSLVRELGA.

Positions Met-1–Gly-380 constitute an FMN hydroxy acid dehydrogenase domain. A substrate-binding site is contributed by Tyr-24. Positions 106 and 127 each coordinate FMN. Residue Tyr-129 coordinates substrate. An FMN-binding site is contributed by Thr-155. Arg-164 is a substrate binding site. Lys-251 provides a ligand contact to FMN. His-275 serves as the catalytic Proton acceptor. Residue Arg-278 participates in substrate binding. Asp-306 to Arg-330 serves as a coordination point for FMN.

It belongs to the FMN-dependent alpha-hydroxy acid dehydrogenase family. In terms of assembly, homotetramer. FMN serves as cofactor.

The protein resides in the cell inner membrane. The catalysed reaction is (S)-lactate + A = pyruvate + AH2. In terms of biological role, catalyzes the conversion of L-lactate to pyruvate. Is coupled to the respiratory chain. In Pseudomonas aeruginosa (strain LESB58), this protein is L-lactate dehydrogenase.